Reading from the N-terminus, the 301-residue chain is UDP-N-acetylenolpyruvoylglucosamine reductase 1 (301 aa).

The 168-residue stretch at 29–196 (KIGGPADILI…LEAVFQLQAG (168 aa)) folds into the FAD-binding PCMH-type domain. Arginine 174 is an active-site residue. Serine 225 (proton donor) is an active-site residue. Residue glutamate 295 is part of the active site.

Belongs to the MurB family. FAD serves as cofactor.

The protein resides in the cytoplasm. It catalyses the reaction UDP-N-acetyl-alpha-D-muramate + NADP(+) = UDP-N-acetyl-3-O-(1-carboxyvinyl)-alpha-D-glucosamine + NADPH + H(+). Its pathway is cell wall biogenesis; peptidoglycan biosynthesis. In terms of biological role, cell wall formation. The protein is UDP-N-acetylenolpyruvoylglucosamine reductase 1 (murB1) of Bacillus cereus (strain ATCC 14579 / DSM 31 / CCUG 7414 / JCM 2152 / NBRC 15305 / NCIMB 9373 / NCTC 2599 / NRRL B-3711).